We begin with the raw amino-acid sequence, 319 residues long: tRNA uridine(34) hydroxylase (319 aa).

One can recognise a Rhodanese domain in the interval Glu133–Ser231. The active-site Cysteine persulfide intermediate is the Cys191.

The protein belongs to the TrhO family.

It carries out the reaction uridine(34) in tRNA + AH2 + O2 = 5-hydroxyuridine(34) in tRNA + A + H2O. Its function is as follows. Catalyzes oxygen-dependent 5-hydroxyuridine (ho5U) modification at position 34 in tRNAs. This is tRNA uridine(34) hydroxylase from Prochlorococcus marinus (strain NATL1A).